The primary structure comprises 148 residues: Deoxyuridine 5'-triphosphate nucleotidohydrolase (148 aa).

Residues 68–70 (RSG), Asn-81, 85–87 (TID), and Lys-95 contribute to the substrate site.

It belongs to the dUTPase family. Mg(2+) is required as a cofactor.

It catalyses the reaction dUTP + H2O = dUMP + diphosphate + H(+). Its pathway is pyrimidine metabolism; dUMP biosynthesis; dUMP from dCTP (dUTP route): step 2/2. This enzyme is involved in nucleotide metabolism: it produces dUMP, the immediate precursor of thymidine nucleotides and it decreases the intracellular concentration of dUTP so that uracil cannot be incorporated into DNA. In Rickettsia felis (strain ATCC VR-1525 / URRWXCal2) (Rickettsia azadi), this protein is Deoxyuridine 5'-triphosphate nucleotidohydrolase.